The primary structure comprises 111 residues: Universal stress protein B (111 aa).

The next 2 membrane-spanning stretches (helical) occupy residues 1 to 21 and 90 to 110; these read MISTVSLFWALCVVCIVNMAR and FLLTSALCGLVVVSLIALMIW.

This sequence belongs to the universal stress protein B family.

The protein localises to the cell inner membrane. The polypeptide is Universal stress protein B (Salmonella arizonae (strain ATCC BAA-731 / CDC346-86 / RSK2980)).